Reading from the N-terminus, the 189-residue chain is Elongation factor P (189 aa).

This sequence belongs to the elongation factor P family.

It localises to the cytoplasm. It participates in protein biosynthesis; polypeptide chain elongation. Involved in peptide bond synthesis. Stimulates efficient translation and peptide-bond synthesis on native or reconstituted 70S ribosomes in vitro. Probably functions indirectly by altering the affinity of the ribosome for aminoacyl-tRNA, thus increasing their reactivity as acceptors for peptidyl transferase. The protein is Elongation factor P of Pseudomonas entomophila (strain L48).